Consider the following 576-residue polypeptide: Sulfite reductase [NADPH] hemoprotein beta-component (576 aa).

The [4Fe-4S] cluster site is built by Cys434, Cys440, Cys479, and Cys483. Position 483 (Cys483) interacts with siroheme.

It belongs to the nitrite and sulfite reductase 4Fe-4S domain family. As to quaternary structure, alpha(8)-beta(8). The alpha component is a flavoprotein, the beta component is a hemoprotein. It depends on siroheme as a cofactor. [4Fe-4S] cluster serves as cofactor.

It catalyses the reaction hydrogen sulfide + 3 NADP(+) + 3 H2O = sulfite + 3 NADPH + 4 H(+). It participates in sulfur metabolism; hydrogen sulfide biosynthesis; hydrogen sulfide from sulfite (NADPH route): step 1/1. Functionally, component of the sulfite reductase complex that catalyzes the 6-electron reduction of sulfite to sulfide. This is one of several activities required for the biosynthesis of L-cysteine from sulfate. This is Sulfite reductase [NADPH] hemoprotein beta-component from Oceanobacillus iheyensis (strain DSM 14371 / CIP 107618 / JCM 11309 / KCTC 3954 / HTE831).